The following is a 384-amino-acid chain: Tryptophan--tRNA ligase (384 aa).

The 'HIGH' region signature appears at 81 to 89 (PSGPMHIGH). Positions 252-256 (KMSAS) match the 'KMSKS' region motif.

Belongs to the class-I aminoacyl-tRNA synthetase family.

The protein localises to the cytoplasm. It catalyses the reaction tRNA(Trp) + L-tryptophan + ATP = L-tryptophyl-tRNA(Trp) + AMP + diphosphate + H(+). This Thermococcus kodakarensis (strain ATCC BAA-918 / JCM 12380 / KOD1) (Pyrococcus kodakaraensis (strain KOD1)) protein is Tryptophan--tRNA ligase.